The following is a 181-amino-acid chain: Inner membrane-spanning protein YciB (181 aa).

5 helical membrane-spanning segments follow: residues 10–30 (LIIF…GALI), 50–70 (MHLI…VFHD), 72–92 (AFIK…LGVS), 118–138 (VTWY…YVAF), and 148–168 (FKVF…VFYL).

It belongs to the YciB family.

Its subcellular location is the cell inner membrane. In terms of biological role, plays a role in cell envelope biogenesis, maintenance of cell envelope integrity and membrane homeostasis. This is Inner membrane-spanning protein YciB from Shewanella sp. (strain ANA-3).